We begin with the raw amino-acid sequence, 114 residues long: UPF0145 protein TTHA1944 (114 aa).

This sequence belongs to the UPF0145 family.

This is UPF0145 protein TTHA1944 from Thermus thermophilus (strain ATCC 27634 / DSM 579 / HB8).